We begin with the raw amino-acid sequence, 374 residues long: tRNA-specific 2-thiouridylase MnmA (374 aa).

Residues 17 to 24 (GMSGGVDS) and Met43 contribute to the ATP site. The interval 103–105 (NPD) is interaction with target base in tRNA. Cys108 (nucleophile) is an active-site residue. Cys108 and Cys204 form a disulfide bridge. An ATP-binding site is contributed by Gly132. The interaction with tRNA stretch occupies residues 154–156 (KDQ). Cys204 functions as the Cysteine persulfide intermediate in the catalytic mechanism. Residues 316 to 317 (RY) form an interaction with tRNA region.

It belongs to the MnmA/TRMU family.

It localises to the cytoplasm. It catalyses the reaction S-sulfanyl-L-cysteinyl-[protein] + uridine(34) in tRNA + AH2 + ATP = 2-thiouridine(34) in tRNA + L-cysteinyl-[protein] + A + AMP + diphosphate + H(+). Its function is as follows. Catalyzes the 2-thiolation of uridine at the wobble position (U34) of tRNA, leading to the formation of s(2)U34. In Pseudomonas fluorescens (strain Pf0-1), this protein is tRNA-specific 2-thiouridylase MnmA.